The chain runs to 510 residues: ATP synthase subunit alpha (510 aa).

169-176 (GDRQTGKT) is an ATP binding site.

It belongs to the ATPase alpha/beta chains family. As to quaternary structure, F-type ATPases have 2 components, CF(1) - the catalytic core - and CF(0) - the membrane proton channel. CF(1) has five subunits: alpha(3), beta(3), gamma(1), delta(1), epsilon(1). CF(0) has four main subunits: a(1), b(1), b'(1) and c(9-12).

Its subcellular location is the cell inner membrane. It carries out the reaction ATP + H2O + 4 H(+)(in) = ADP + phosphate + 5 H(+)(out). Functionally, produces ATP from ADP in the presence of a proton gradient across the membrane. The alpha chain is a regulatory subunit. The sequence is that of ATP synthase subunit alpha from Rhodopseudomonas palustris (strain BisB5).